The primary structure comprises 66 residues: Toxin Os1 (66 aa).

Residues 2 to 66 (RDGYIVQLHN…PIKWLDPKCY (65 aa)) form the LCN-type CS-alpha/beta domain. Intrachain disulfides connect cysteine 12–cysteine 65, cysteine 16–cysteine 37, cysteine 22–cysteine 47, and cysteine 26–cysteine 49.

The protein belongs to the long (4 C-C) scorpion toxin superfamily. Sodium channel inhibitor family. Alpha subfamily. As to expression, expressed by the venom gland.

It localises to the secreted. Functionally, alpha toxins bind voltage-independently at site-3 of sodium channels (Nav) and inhibit the inactivation of the activated channels, thereby blocking neuronal transmission. This toxin possesses a high paralytic activity against mice. The chain is Toxin Os1 from Orthochirus scrobiculosus (Central Asian scorpion).